We begin with the raw amino-acid sequence, 804 residues long: uncharacterized protein (804 aa).

10 consecutive transmembrane segments (helical) span residues 15 to 35 (LLIV…LGNI), 243 to 263 (FLLL…AVAM), 301 to 321 (LSAV…MVLL), 333 to 353 (SLWP…LVGL), 381 to 401 (FYLP…MGGS), 403 to 423 (LLWA…VLGW), 453 to 473 (TLSQ…LLVL), 680 to 700 (ALEV…LAQV), 734 to 754 (MLGF…LAVL), and 769 to 789 (LWIV…GWLG).

Belongs to the ABC-4 integral membrane protein family.

Its subcellular location is the cell membrane. This is an uncharacterized protein from Escherichia coli (strain K12).